The following is a 584-amino-acid chain: Aspartate--tRNA(Asp/Asn) ligase (584 aa).

Glu-177 serves as a coordination point for L-aspartate. An aspartate region spans residues 201 to 204; it reads QLFK. Arg-223 lines the L-aspartate pocket. Residues 223–225 and Gln-232 each bind ATP; that span reads RDE. His-447 contacts L-aspartate. Glu-481 contributes to the ATP binding site. Residue Arg-488 participates in L-aspartate binding. 533–536 contributes to the ATP binding site; sequence GLDR.

This sequence belongs to the class-II aminoacyl-tRNA synthetase family. Type 1 subfamily. As to quaternary structure, homodimer.

It is found in the cytoplasm. The catalysed reaction is tRNA(Asx) + L-aspartate + ATP = L-aspartyl-tRNA(Asx) + AMP + diphosphate. Aspartyl-tRNA synthetase with relaxed tRNA specificity since it is able to aspartylate not only its cognate tRNA(Asp) but also tRNA(Asn). Reaction proceeds in two steps: L-aspartate is first activated by ATP to form Asp-AMP and then transferred to the acceptor end of tRNA(Asp/Asn). The sequence is that of Aspartate--tRNA(Asp/Asn) ligase from Chlamydia caviae (strain ATCC VR-813 / DSM 19441 / 03DC25 / GPIC) (Chlamydophila caviae).